The primary structure comprises 368 residues: Galanin receptor type 3 (368 aa).

The Extracellular portion of the chain corresponds to 1–20 (MADAQNISLDSPGSVGAVAV). N-linked (GlcNAc...) asparagine glycosylation occurs at Asn6. The chain crosses the membrane as a helical span at residues 21–41 (PVVFALIFLLGTVGNGLVLAV). The Cytoplasmic segment spans residues 42–57 (LLQPGPSAWQEPGSTT). A helical transmembrane segment spans residues 58–78 (DLFILNLAVADLCFILCCVPF). Residues 79–96 (QATIYTLDAWLFGALVCK) are Extracellular-facing. Cys95 and Cys172 are oxidised to a cystine. A helical membrane pass occupies residues 97–118 (AVHLLIYLTMYASSFTLAAVSV). Residues 119-138 (DRYLAVRHPLRSRALRTPRN) lie on the Cytoplasmic side of the membrane. A helical transmembrane segment spans residues 139-159 (ARAAVGLVWLLAALFSAPYLS). Residues 160 to 184 (YYGTVRYGALELCVPAWEDARRRAL) are Extracellular-facing. The helical transmembrane segment at 185 to 205 (DVATFAAGYLLPVAVVSLAYG) threads the bilayer. At 206-236 (RTLRFLWAAVGPAGAAAAEARRRATGRAGRA) the chain is on the cytoplasmic side. The helical transmembrane segment at 237–257 (MLAVAALYALCWGPHHALILC) threads the bilayer. The Extracellular segment spans residues 258-259 (FW). The chain crosses the membrane as a helical span at residues 260–280 (YGRFAFSPATYACRLASHCLA). Topologically, residues 281–368 (YANSCLNPLV…HGGEAARGPE (88 aa)) are cytoplasmic. Cys308 carries the S-palmitoyl cysteine lipid modification. The interval 317-368 (RRALRRVRPASSGPPGCPGDARPSGRLLAGGGQGPEPREGPVHGGEAARGPE) is disordered.

It belongs to the G-protein coupled receptor 1 family.

The protein resides in the cell membrane. Functionally, receptor for the hormone galanin. Receptor for the hormone spexin-1. The chain is Galanin receptor type 3 (GALR3) from Homo sapiens (Human).